The sequence spans 166 residues: Transmembrane protein 190 (166 aa).

Positions 1-21 (MVGSGISALGLLLLMQGSVDA) are cleaved as a signal peptide. The Extracellular segment spans residues 22 to 81 (NGIQGFFYPWSCEGDVWDRESCGGQAAIENPNLCLRLRCCYRDGVCYHQRPDENMRRKHM). The region spanning 31 to 71 (WSCEGDVWDRESCGGQAAIENPNLCLRLRCCYRDGVCYHQR) is the P-type domain. 3 disulfide bridges follow: Cys-33-Cys-61, Cys-43-Cys-60, and Cys-55-Cys-67. The helical transmembrane segment at 82–102 (WALGWTCGSLLFLITSICLFW) threads the bilayer. Residues 103-166 (WARRQDMLHL…VSGEDTGGEE (64 aa)) lie on the Cytoplasmic side of the membrane. The interval 130-166 (LSKDRRSANKSTTVLQSPGGEVETAAAVSGEDTGGEE) is disordered.

In terms of tissue distribution, detected in testis and in a mixture of spermatogenic cells at various stages (testicular germ cells). Not detected in heart, brain, spleen, lung, liver, skeletal muscle and kidney.

It is found in the membrane. This is Transmembrane protein 190 (Tmem190) from Mus musculus (Mouse).